Consider the following 822-residue polypeptide: Probable alpha,alpha-trehalose-phosphate synthase [UDP-forming] 2 (822 aa).

The segment at 12 to 479 (PRLLVVANRL…GLDFMSELNG (468 aa)) is glycosyltransferase.

It in the N-terminal section; belongs to the glycosyltransferase 20 family. The protein in the C-terminal section; belongs to the trehalose phosphatase family.

The enzyme catalyses D-glucose 6-phosphate + UDP-alpha-D-glucose = alpha,alpha-trehalose 6-phosphate + UDP + H(+). The polypeptide is Probable alpha,alpha-trehalose-phosphate synthase [UDP-forming] 2 (TPS2) (Arabidopsis thaliana (Mouse-ear cress)).